The following is an 85-amino-acid chain: Cell division topological specificity factor (85 aa).

This sequence belongs to the MinE family.

Functionally, prevents the cell division inhibition by proteins MinC and MinD at internal division sites while permitting inhibition at polar sites. This ensures cell division at the proper site by restricting the formation of a division septum at the midpoint of the long axis of the cell. The protein is Cell division topological specificity factor of Deinococcus geothermalis (strain DSM 11300 / CIP 105573 / AG-3a).